A 294-amino-acid polypeptide reads, in one-letter code: Arsenical-resistance protein ARR1 (294 aa).

The span at 1–11 (MAKPRGRKGGR) shows a compositional bias: basic residues. The interval 1–29 (MAKPRGRKGGRKPSLTPPKNKRAAQLRAS) is disordered. The tract at residues 22-45 (RAAQLRASQNAFRKRKLERLEELE) is basic motif. The 51-residue stretch at 22-72 (RAAQLRASQNAFRKRKLERLEELEKKEAQLTVTNDQIHILKKENELLHFML) folds into the bZIP domain. The tract at residues 44-72 (LEKKEAQLTVTNDQIHILKKENELLHFML) is leucine-zipper. Arsenite is bound by residues C132, C137, and C274.

This sequence belongs to the bZIP family. YAP subfamily. In terms of assembly, homodimer. Phosphorylation by HOG1 promotes nuclear localization in the presence of arsenic.

The protein localises to the cytoplasm. The protein resides in the nucleus. With respect to regulation, transcriptional activity is controlled by regulated degradation by the ubiquitin-proteasome pathway in absence of arsenic. Arsenic-exposure results in stabilization and increased transcriptional activity. Its function is as follows. Transcription activator required for resistance to arsenic compounds and for a regulated expression of ACR2, ACR3 and YCF1. This Saccharomyces cerevisiae (strain ATCC 204508 / S288c) (Baker's yeast) protein is Arsenical-resistance protein ARR1.